A 959-amino-acid chain; its full sequence is Translation initiation factor IF-2 (959 aa).

The span at 1-10 shows a compositional bias: basic and acidic residues; that stretch reads MSDKTNDDKT. The interval 1 to 374 is disordered; that stretch reads MSDKTNDDKT…SQMQETREKI (374 aa). The span at 27 to 37 shows a compositional bias: polar residues; sequence EQSTVRQNFSH. Low complexity-rich tracts occupy residues 63-118 and 128-138; these read AAAA…VTKP and QRPGGQQAQRP. Composition is skewed to basic and acidic residues over residues 154–225 and 232–241; these read SEMD…EAAK and ARSERRDDAR. Over residues 246 to 284 the composition is skewed to low complexity; it reads GARPQQAGRPQGGRPQPAGRPQQGSPRPAPIIADAAPIA. Residues 318 to 333 are compositionally biased toward basic and acidic residues; that stretch reads PEVRAPKVVKGEDDRR. In terms of domain architecture, tr-type G spans 457–626; sequence SRPPVVTIMG…LLQAEMLDLK (170 aa). The segment at 466–473 is G1; the sequence is GHVDHGKT. 466 to 473 serves as a coordination point for GTP; the sequence is GHVDHGKT. Residues 491–495 form a G2 region; the sequence is GITQH. A G3 region spans residues 512 to 515; it reads DTPG. GTP contacts are provided by residues 512–516 and 566–569; these read DTPGH and NKID. The segment at 566-569 is G4; sequence NKID. The tract at residues 602 to 604 is G5; sequence SAK.

It belongs to the TRAFAC class translation factor GTPase superfamily. Classic translation factor GTPase family. IF-2 subfamily.

The protein localises to the cytoplasm. Functionally, one of the essential components for the initiation of protein synthesis. Protects formylmethionyl-tRNA from spontaneous hydrolysis and promotes its binding to the 30S ribosomal subunits. Also involved in the hydrolysis of GTP during the formation of the 70S ribosomal complex. In Brucella melitensis biotype 1 (strain ATCC 23456 / CCUG 17765 / NCTC 10094 / 16M), this protein is Translation initiation factor IF-2.